The chain runs to 154 residues: Ribonuclease HI (154 aa).

The region spanning 1–142 (MTKHVEIFTD…CDELARTAAE (142 aa)) is the RNase H type-1 domain. Residues Asp10, Glu48, Asp70, and Asp134 each contribute to the Mg(2+) site.

Belongs to the RNase H family. Monomer. The cofactor is Mg(2+).

Its subcellular location is the cytoplasm. It carries out the reaction Endonucleolytic cleavage to 5'-phosphomonoester.. Functionally, endonuclease that specifically degrades the RNA of RNA-DNA hybrids. The sequence is that of Ribonuclease HI from Vibrio parahaemolyticus serotype O3:K6 (strain RIMD 2210633).